The primary structure comprises 195 residues: Elongation factor Ts (195 aa).

The interval 81–84 (TDFV) is involved in Mg(2+) ion dislocation from EF-Tu.

The protein belongs to the EF-Ts family.

Its subcellular location is the cytoplasm. Its function is as follows. Associates with the EF-Tu.GDP complex and induces the exchange of GDP to GTP. It remains bound to the aminoacyl-tRNA.EF-Tu.GTP complex up to the GTP hydrolysis stage on the ribosome. This chain is Elongation factor Ts, found in Rubrobacter xylanophilus (strain DSM 9941 / JCM 11954 / NBRC 16129 / PRD-1).